The sequence spans 87 residues: MKTFDSLYEELLNRAQTRPEGSGTVAALDKGIHHLGKKVIEEAGEVWIAAEYETDEELAGEISQLIYWTQVIMVARGLKPEDIYKNL.

This sequence belongs to the PRA-PH family.

The protein localises to the cytoplasm. It carries out the reaction 1-(5-phospho-beta-D-ribosyl)-ATP + H2O = 1-(5-phospho-beta-D-ribosyl)-5'-AMP + diphosphate + H(+). Its pathway is amino-acid biosynthesis; L-histidine biosynthesis; L-histidine from 5-phospho-alpha-D-ribose 1-diphosphate: step 2/9. The chain is Phosphoribosyl-ATP pyrophosphatase (hisE) from Corynebacterium glutamicum (strain ATCC 13032 / DSM 20300 / JCM 1318 / BCRC 11384 / CCUG 27702 / LMG 3730 / NBRC 12168 / NCIMB 10025 / NRRL B-2784 / 534).